The sequence spans 3103 residues: Extracellular matrix protein 3 (3103 aa).

The signal sequence occupies residues 1 to 19 (MASALLCFLAAILPGMIAA). The Extracellular segment spans residues 20-3047 (QNTWVLGTSD…TYELAPKGTN (3028 aa)). CSPG repeat units lie at residues 289–388 (PPSL…LEIV), 411–499 (APVV…FRMT), 520–630 (APIV…FRVV), 656–762 (PPEM…FVVQ), 784–875 (QPPT…LEIT), 901–993 (LPPG…LTLS), 1022–1124 (APNV…FRCT), 1145–1238 (EEPQ…VLLT), 1259–1357 (TPRL…FDIT), 1378–1470 (VHPS…FQVT), 1490–1579 (KEPV…FIVT), and 1613–1710 (APQI…VEVR). 2 N-linked (GlcNAc...) asparagine glycosylation sites follow: asparagine 330 and asparagine 453. Residues asparagine 989, asparagine 1024, asparagine 1042, asparagine 1207, asparagine 1294, asparagine 1321, and asparagine 1327 are each glycosylated (N-linked (GlcNAc...) asparagine). Asparagine 1542, asparagine 1674, asparagine 1679, asparagine 1725, and asparagine 1739 each carry an N-linked (GlcNAc...) asparagine glycan. Calx-beta domains are found at residues 1717 to 1816 (LPNQ…IILH), 1829 to 1942 (AVVT…VKLS), 1956 to 2062 (NVII…LVLN), and 2077 to 2179 (ITIN…LVLG). 5 N-linked (GlcNAc...) asparagine glycosylation sites follow: asparagine 2080, asparagine 2195, asparagine 2274, asparagine 2385, and asparagine 2932. The Calx-beta 5 domain occupies 2197–2302 (TVVTVHDVGD…MREAFTLHIT (106 aa)). Residues 2983 to 3013 (SSGIGKRETEHHAISSRQRRQANSEALVDPA) form a disordered region. Residues 3048 to 3068 (VVMIAVVIGVILIILLVALVI) traverse the membrane as a helical segment. The Cytoplasmic portion of the chain corresponds to 3069–3103 (GVVVRRRQAKQQPVVVVNGSAKVVSNVHFDDNTEV).

It belongs to the FRAS1 family. Component of extracellular matrix fibers that interact with PMC filopodia during gastrulation (at protein level).

Its subcellular location is the cell membrane. Its function is as follows. Extracellular matrix protein that may serve as substrate for the migratory primary mesenchyme cells (PMCs), the interaction possibly providing guidance information to migrating PMCs. This is Extracellular matrix protein 3 (ECM3) from Lytechinus variegatus (Green sea urchin).